A 389-amino-acid polypeptide reads, in one-letter code: MIVKISWPKNNITSECFRRFGSFKRRSKSKKMSAFIEETKSLLPRIAFIACGCFSPPTPMHLRMFEIAKDHFEMQGTHRVVGGIISPTHDSYGKKGLASALDRCAMVKLATQSSNWIRLSDWEVHQNQWMRTQAVLQHHQNYINNHINSGGGGGDDGENTHLPGWLPRGLHDSRDPVHLKLLCGADLLESFAVPGLWAEADIEDIVANHGLVVITRAGSNPGKFIFDSDILTKYQSNITLITNWVPNEVSSTLIRRLLGRGQSVKYLLDDLVLEYIKRQRLFNFKSKYITDAVRPNHLLFNHAYTDNNKNANSYSIGDQLEQDMDESDTPSPQLQHTPTSRVFCCGEVPLRGSKVLRSGPGQAVQVITMQADEKEESQAKKQKISQVQL.

The short motif at 380–383 (KKQK) is the Nuclear localization signal element.

Belongs to the eukaryotic NMN adenylyltransferase family. In terms of tissue distribution, abundantly expressed in neuronal and muscle cells. Present at relatively low levels at the neuromuscular junction. Expressed in the eye; present in photoreceptor cells and various neurons in the lamina cortex and medulla cortex and at low levels in the lamina.

The protein localises to the nucleus. It is found in the cytoplasm. It localises to the presynaptic active zone. It carries out the reaction beta-nicotinamide D-ribonucleotide + ATP + H(+) = diphosphate + NAD(+). It catalyses the reaction nicotinate beta-D-ribonucleotide + ATP + H(+) = deamido-NAD(+) + diphosphate. The protein operates within cofactor biosynthesis; NAD(+) biosynthesis; NAD(+) from nicotinamide D-ribonucleotide: step 1/1. Its pathway is cofactor biosynthesis; NAD(+) biosynthesis; deamido-NAD(+) from nicotinate D-ribonucleotide: step 1/1. Its function is as follows. Catalyzes the formation of NAD(+) from nicotinamide mononucleotide (NMN) and ATP. Essential for viability. Stress-response chaperone protein that prevents toxic aggregation of proteins and promotes proteasome-mediated degradation of misfolded proteins; this is independent of its NAD(+) synthesis activity. Neuroprotective in response to toxic protein aggregation, for example by overexpressed Atx-1/ataxin-1. Required for maintenance and integrity of mature neurons, protecting them from neuronal activity-induced neurodegeneration. Required for the maintenance of axonal and dendritic integrity in both central and peripheral neurons. Chaperone function and neuroprotective roles are largely independent of NAD(+) synthesis activity. Catalyzes the formation of NAD(+) from nicotinamide mononucleotide (NMN) and ATP. Has, or stimulates, chaperone holdase activity but not refoldase activity. Does not have neuroprotective properties and may stimulate apoptosis and neurodegeneration in response to toxic protein aggregates. In terms of biological role, catalyzes the formation of NAD(+) from nicotinamide mononucleotide (NMN) and ATP. Has, or stimulates, chaperone holdase and refoldase activity. Neuroprotective and reduces the toxic load of protein aggregates, preventing apoptosis and neurodegeneration. Promotes clearance of nuclear misfolded protein aggregates. This chain is Nicotinamide-nucleotide adenylyltransferase, found in Drosophila melanogaster (Fruit fly).